The sequence spans 102 residues: Large ribosomal subunit protein bL21 (102 aa).

Belongs to the bacterial ribosomal protein bL21 family. As to quaternary structure, part of the 50S ribosomal subunit. Contacts protein L20.

Functionally, this protein binds to 23S rRNA in the presence of protein L20. In Ehrlichia chaffeensis (strain ATCC CRL-10679 / Arkansas), this protein is Large ribosomal subunit protein bL21.